The primary structure comprises 304 residues: Porphobilinogen deaminase (304 aa).

C240 carries the S-(dipyrrolylmethanemethyl)cysteine modification.

This sequence belongs to the HMBS family. In terms of assembly, monomer. Requires dipyrromethane as cofactor.

It catalyses the reaction 4 porphobilinogen + H2O = hydroxymethylbilane + 4 NH4(+). It participates in porphyrin-containing compound metabolism; protoporphyrin-IX biosynthesis; coproporphyrinogen-III from 5-aminolevulinate: step 2/4. Tetrapolymerization of the monopyrrole PBG into the hydroxymethylbilane pre-uroporphyrinogen in several discrete steps. This is Porphobilinogen deaminase from Xanthomonas oryzae pv. oryzae (strain KACC10331 / KXO85).